A 678-amino-acid chain; its full sequence is Sulfoquinovosidase (678 aa).

Positions 288, 301, 302, and 304 each coordinate a 6-sulfo-alpha-D-quinovosyldiacylglycerol. The Nucleophile role is filled by aspartate 405. Glutamate 408 is an active-site residue. The active-site Proton donor is aspartate 472. Histidine 537 contacts a 6-sulfo-alpha-D-quinovosyldiacylglycerol.

Belongs to the glycosyl hydrolase 31 family.

The enzyme catalyses a 6-sulfo-alpha-D-quinovosyldiacylglycerol + H2O = 6-sulfo-alpha-D-quinovose + a 1,2-diacyl-sn-glycerol. The catalysed reaction is 3-(6-sulfo-alpha-D-quinovosyl)glycerol + H2O = 6-sulfo-alpha-D-quinovose + glycerol. It functions in the pathway glycolipid metabolism. With respect to regulation, is inactivated in vitro by the mechanism-based inactivator 5-fluoro-beta-L-idopyranosyl fluoride (5FIdoF) that yields a covalent glycosyl-enzyme complex with the active site nucleophile Asp-405. Functionally, catalyzes the hydrolysis of sulfoquinovosyl diacylglycerides (SQDG) to sulfoquinovose (SQ), which is then degraded by E.coli through the SQ Embden-Meyerhof-Parnas (SQ-EMP) sulfoglycolysis pathway as a source of carbon and sulfur. Therefore, is likely involved in the utilization of the sulfoquinovose headgroup found in ubiquitous plant sulfolipids. Is also able to hydrolyze simple sulfoquinovosides such as sulfoquinovosyl glycerol (SQGro). In vitro, can use the substrate analog para-nitrophenyl alpha-sulfoquinovoside (PNPSQ), but shows no detectable activity toward 4-nitrophenyl alpha-D-glucopyranoside (PNPGlc). Is a retaining glycoside hydrolase, since it forms the alpha anomer of SQ. Also exhibits some alpha-glucosidase activity against alpha-glucosyl fluoride in vitro, although natural substrates, such as alpha-glucobioses are scarcely hydrolyzed. The sequence is that of Sulfoquinovosidase from Escherichia coli (strain K12).